The chain runs to 458 residues: Ammonium transporter Rh type B (458 aa).

At 1–11 (MTDAATNMRLK) the chain is on the cytoplasmic side. Residues 12 to 32 (LPITCFILEIILIILFGTLVQ) form a helical membrane-spanning segment. The Extracellular segment spans residues 33–58 (YDYETDAKEWHNTSHQDYENDFYFRY). A glycan (N-linked (GlcNAc...) asparagine) is linked at Asn44. A helical transmembrane segment spans residues 59–79 (PSFQDVHVMIFVGFGFLMTFL). Over 80–83 (QRYG) the chain is Cytoplasmic. Residues 84-104 (FGSVGFNFLIAAFSLQWATLM) form a helical membrane-spanning segment. The Extracellular segment spans residues 105-121 (QGFFHGMHGGKIHIGVE). The helical transmembrane segment at 122-142 (SMINADFCTGSVLISFGAVLG) threads the bilayer. Over 143–151 (KTSPIQLLT) the chain is Cytoplasmic. The chain crosses the membrane as a helical span at residues 152-172 (MAIFEVTLFAVNEFILLSLLG). The Extracellular portion of the chain corresponds to 173-176 (TKDA). Residues 177–197 (GGSMTIHTFGAYFGLMVTRIL) form a helical membrane-spanning segment. Residues 198 to 216 (YRPNLDKSKHRNSSVYHSD) are Cytoplasmic-facing. Residues 217–237 (LFAMIGTVYLWMFWPSFNSAI) form a helical membrane-spanning segment. The Extracellular segment spans residues 238-247 (TAHGDDQHRT). The chain crosses the membrane as a helical span at residues 248-270 (ALNTYYSLAACTLATYGMSAITS). The Cytoplasmic portion of the chain corresponds to 271-274 (HDGK). Residues 275–295 (LDMVHIQNAALAGGVAVGTAG) form a helical membrane-spanning segment. Residues 296–298 (EMM) lie on the Extracellular side of the membrane. A helical transmembrane segment spans residues 299–319 (LTPFGSMIVGFMAGIISVLGF). Residues 320–340 (KFLSPILEDKLKIQDTCGIHN) lie on the Cytoplasmic side of the membrane. The helical transmembrane segment at 341–361 (LHGMPGVLGAIVGAVTAALAT) threads the bilayer. Topologically, residues 362 to 391 (TDVYGQGMADVFPAVADGSVNATKQGGIQA) are extracellular. A helical membrane pass occupies residues 392–412 (LSLAITLGIAVLGGLIVGFVL). Topologically, residues 413 to 458 (KLPVFGTPPDTLCFEDSVYWEVPGSESPEEGELTSVKPEETEHLNS) are cytoplasmic. The tract at residues 436–458 (GSESPEEGELTSVKPEETEHLNS) is disordered. The span at 449 to 458 (KPEETEHLNS) shows a compositional bias: basic and acidic residues.

The protein belongs to the ammonium transporter (TC 2.A.49) family. Rh subfamily. Specifically expressed in the gill by pavement cells (at protein level).

It localises to the apicolateral cell membrane. The protein localises to the cytoplasmic vesicle membrane. Functionally, functions as an ammonia transporter. May play a role in the elimination of ammonia in the gill. The protein is Ammonium transporter Rh type B (rhbg) of Takifugu rubripes (Japanese pufferfish).